Here is a 775-residue protein sequence, read N- to C-terminus: Polyribonucleotide nucleotidyltransferase (775 aa).

The interval 223-247 is disordered; sequence DEQVPEKPRKGRRRGRKSSPRKKTD. Residues 231–243 show a composition bias toward basic residues; the sequence is RKGRRRGRKSSPR. Mg(2+) contacts are provided by Asp567 and Asp573. In terms of domain architecture, KH spans 633 to 692; that stretch reads PRITTISVPVSKIGEVIGPKGKNINQITEDTGARVSIEDDGTVFISATSGGSAEAAVDRI. Residues 704 to 773 form the S1 motif domain; sequence GERFLGTVVK…NRGKISLVPV (70 aa).

This sequence belongs to the polyribonucleotide nucleotidyltransferase family. Requires Mg(2+) as cofactor.

It is found in the cytoplasm. The enzyme catalyses RNA(n+1) + phosphate = RNA(n) + a ribonucleoside 5'-diphosphate. Functionally, involved in mRNA degradation. Catalyzes the phosphorolysis of single-stranded polyribonucleotides processively in the 3'- to 5'-direction. The sequence is that of Polyribonucleotide nucleotidyltransferase from Corynebacterium kroppenstedtii (strain DSM 44385 / JCM 11950 / CIP 105744 / CCUG 35717).